The chain runs to 601 residues: Ribosomal oxygenase 1 (601 aa).

Over residues 1–11 the composition is skewed to basic and acidic residues; sequence MAACGAEERQR. The interval 1–149 is disordered; that stretch reads MAACGAEERQ…PGGGGVPGLL (149 aa). Residues 61–70 are compositionally biased toward low complexity; it reads ERAAPPQGAA. Basic and acidic residues predominate over residues 73-87; it reads DRVERAGSSEAKQGD. One can recognise a JmjC domain in the interval 254–399; sequence CSLRLLSPQA…DFLEKLLPAA (146 aa). Fe cation-binding residues include histidine 300, aspartate 302, and histidine 365.

Belongs to the ROX family. NO66 subfamily. The cofactor is Fe(2+).

It is found in the nucleus. Its subcellular location is the nucleolus. It localises to the nucleoplasm. The catalysed reaction is N(6),N(6)-dimethyl-L-lysyl(36)-[histone H3] + 2 2-oxoglutarate + 2 O2 = L-lysyl(36)-[histone H3] + 2 formaldehyde + 2 succinate + 2 CO2. It catalyses the reaction N(6)-methyl-L-lysyl-[protein] + 2-oxoglutarate + O2 = L-lysyl-[protein] + formaldehyde + succinate + CO2. It carries out the reaction L-histidyl-[protein] + 2-oxoglutarate + O2 = (3S)-3-hydroxy-L-histidyl-[protein] + succinate + CO2. Oxygenase that can act as both a histone lysine demethylase and a ribosomal histidine hydroxylase. Specifically demethylates 'Lys-4' (H3K4me) and 'Lys-36' (H3K36me) of histone H3, thereby playing a central role in histone code. Preferentially demethylates trimethylated H3 'Lys-4' (H3K4me3) and monomethylated H3 'Lys-4' (H3K4me1) residues, while it has weaker activity for dimethylated H3 'Lys-36' (H3K36me2). Also catalyzes demethylation of non-histone proteins. Also catalyzes the hydroxylation of 60S ribosomal protein L8 on 'His-216', thereby playing a role in ribosome biogenesis. In Gallus gallus (Chicken), this protein is Ribosomal oxygenase 1 (RIOX1).